Here is a 419-residue protein sequence, read N- to C-terminus: Cell division protein FtsZ (419 aa).

Residues 22-26 (GGGGN), 109-111 (GSG), Glu-140, Arg-144, and Asp-188 contribute to the GTP site. The tract at residues 397 to 419 (ERFEAPISQDEDELDTPPFFKNR) is disordered.

This sequence belongs to the FtsZ family. Homodimer. Polymerizes to form a dynamic ring structure in a strictly GTP-dependent manner. Interacts directly with several other division proteins. Interacts with CcrZ; the interaction is direct.

The protein localises to the cytoplasm. Essential cell division protein that forms a contractile ring structure (Z ring) at the future cell division site. The regulation of the ring assembly controls the timing and the location of cell division. One of the functions of the FtsZ ring is to recruit other cell division proteins to the septum to produce a new cell wall between the dividing cells. Binds GTP and shows GTPase activity. The polypeptide is Cell division protein FtsZ (Streptococcus pneumoniae serotype 2 (strain D39 / NCTC 7466)).